The sequence spans 566 residues: Membrane protein insertase YidC (566 aa).

A run of 5 helical transmembrane segments spans residues 3-23 (IKRIILYVIVALLAIALFNAW), 346-366 (GWLWPISMLLFWILSAVHAVV), 369-389 (WGWSIIITTILIKIVFYWFSA), 436-456 (GGCLPMLIQVPVFIAFYYVII), and 509-529 (MWILPVIFTVFFINFPAGLVL).

This sequence belongs to the OXA1/ALB3/YidC family. Type 1 subfamily. As to quaternary structure, interacts with the Sec translocase complex via SecD. Specifically interacts with transmembrane segments of nascent integral membrane proteins during membrane integration.

Its subcellular location is the cell inner membrane. In terms of biological role, required for the insertion and/or proper folding and/or complex formation of integral membrane proteins into the membrane. Involved in integration of membrane proteins that insert both dependently and independently of the Sec translocase complex, as well as at least some lipoproteins. Aids folding of multispanning membrane proteins. This Coxiella burnetii (strain RSA 331 / Henzerling II) protein is Membrane protein insertase YidC.